The following is a 254-amino-acid chain: Pyridoxine 5'-phosphate synthase (254 aa).

Asparagine 8 is a 3-amino-2-oxopropyl phosphate binding site. Residue aspartate 10 to histidine 11 coordinates 1-deoxy-D-xylulose 5-phosphate. Arginine 19 contributes to the 3-amino-2-oxopropyl phosphate binding site. The Proton acceptor role is filled by histidine 44. Residues arginine 46 and histidine 51 each coordinate 1-deoxy-D-xylulose 5-phosphate. Residue glutamate 74 is the Proton acceptor of the active site. 1-deoxy-D-xylulose 5-phosphate is bound at residue threonine 104. Histidine 198 acts as the Proton donor in catalysis. 3-amino-2-oxopropyl phosphate contacts are provided by residues glycine 199 and glycine 220–histidine 221.

The protein belongs to the PNP synthase family. As to quaternary structure, homooctamer; tetramer of dimers.

Its subcellular location is the cytoplasm. The catalysed reaction is 3-amino-2-oxopropyl phosphate + 1-deoxy-D-xylulose 5-phosphate = pyridoxine 5'-phosphate + phosphate + 2 H2O + H(+). Its pathway is cofactor biosynthesis; pyridoxine 5'-phosphate biosynthesis; pyridoxine 5'-phosphate from D-erythrose 4-phosphate: step 5/5. In terms of biological role, catalyzes the complicated ring closure reaction between the two acyclic compounds 1-deoxy-D-xylulose-5-phosphate (DXP) and 3-amino-2-oxopropyl phosphate (1-amino-acetone-3-phosphate or AAP) to form pyridoxine 5'-phosphate (PNP) and inorganic phosphate. The chain is Pyridoxine 5'-phosphate synthase from Caulobacter vibrioides (strain ATCC 19089 / CIP 103742 / CB 15) (Caulobacter crescentus).